A 178-amino-acid chain; its full sequence is Caveolin-1 (178 aa).

Residue S2 is modified to N-acetylserine. At S2 the chain carries Phosphoserine. Residues 2-94 (SGGKYVDSEG…WKASFTTFTV (93 aa)) form a required for homooligomerization region. Residues 2 to 104 (SGGKYVDSEG…TKYWFYRLLS (103 aa)) lie on the Cytoplasmic side of the membrane. K5 is modified (N6-acetyllysine; alternate). Residue K5 forms a Glycyl lysine isopeptide (Lys-Gly) (interchain with G-Cter in ubiquitin); alternate linkage. Phosphotyrosine is present on Y6. A Phosphoserine modification is found at S9. Position 14 is a phosphotyrosine; by ABL1 (Y14). Y25 is modified (phosphotyrosine). Glycyl lysine isopeptide (Lys-Gly) (interchain with G-Cter in ubiquitin) cross-links involve residues K26 and K30. The residue at position 37 (S37) is a Phosphoserine. Residues K39, K47, and K57 each participate in a glycyl lysine isopeptide (Lys-Gly) (interchain with G-Cter in ubiquitin) cross-link. The interaction with CAVIN3 stretch occupies residues 82 to 94 (DGIWKASFTTFTV). Positions 105-125 (ALFGIPMALIWGIYFAILSFL) form an intramembrane region, helical. Residues 126–178 (HIWAVVPCIKSFLIEIQCISRVYSIYVHTVCDPLFEAVGKIFSNVRINLQKEI) lie on the Cytoplasmic side of the membrane. Positions 131–142 (VPCIKSFLIEIQ) are interacts with SPRY1, SPRY2, SPRY3 and SPRY4. S-palmitoyl cysteine attachment occurs at residues C133, C143, and C156. The interval 149 to 160 (SIYVHTVCDPLF) is interacts with SPRY1, SPRY2, and SPRY4. The interval 167-178 (FSNVRINLQKEI) is interacts with SPRY1, SPRY2, SPRY3 and SPRY4.

Belongs to the caveolin family. Homooligomer. Interacts with GLIPR2. Interacts with NOSTRIN. Interacts with SNAP25 and STX1A. Interacts (via the N-terminus) with DPP4; the interaction is direct. Interacts with CTNNB1, CDH1 and JUP. Interacts with PACSIN2; this interaction induces membrane tubulation. Interacts with SLC7A9. Interacts with BMX and BTK. Interacts with TGFBR1. Interacts with CAVIN3 (via leucine-zipper domain) in a cholesterol-sensitive manner. Interacts with CAVIN1. Interacts with EHD2 in a cholesterol-dependent manner. Forms a ternary complex with UBXN6 and VCP; mediates CAV1 targeting to lysosomes for degradation. Interacts with ABCG1; this interaction regulates ABCG1-mediated cholesterol efflux. Interacts with NEU3; this interaction enhances NEU3 sialidase activity within caveola. Interacts (via C-terminus) with SPRY1, SPRY2 (via C-terminus), SPRY3, and SPRY4. Interacts with IGFBP5; this interaction allows trafficking of IGFBP5 from the plasma membrane to the nucleus. In terms of processing, phosphorylated at Tyr-14 by ABL1 in response to oxidative stress. Ubiquitinated. Undergo monoubiquitination and multi- and/or polyubiquitination. Monoubiquitination of N-terminal lysines promotes integration in a ternary complex with UBXN6 and VCP which promotes oligomeric CAV1 targeting to lysosomes for degradation. Ubiquitinated by ZNRF1; leading to degradation and modulation of the TLR4-mediated immune response.

It localises to the golgi apparatus membrane. The protein resides in the cell membrane. It is found in the membrane. Its subcellular location is the caveola. The protein localises to the membrane raft. In terms of biological role, may act as a scaffolding protein within caveolar membranes. Forms a stable heterooligomeric complex with CAV2 that targets to lipid rafts and drives caveolae formation. Mediates the recruitment of CAVIN proteins (CAVIN1/2/3/4) to the caveolae. Interacts directly with G-protein alpha subunits and can functionally regulate their activity. Involved in the costimulatory signal essential for T-cell receptor (TCR)-mediated T-cell activation. Its binding to DPP4 induces T-cell proliferation and NF-kappa-B activation in a T-cell receptor/CD3-dependent manner. Recruits CTNNB1 to caveolar membranes and may regulate CTNNB1-mediated signaling through the Wnt pathway. Negatively regulates TGFB1-mediated activation of SMAD2/3 by mediating the internalization of TGFBR1 from membrane rafts leading to its subsequent degradation. Binds 20(S)-hydroxycholesterol (20(S)-OHC). The sequence is that of Caveolin-1 (CAV1) from Pongo abelii (Sumatran orangutan).